The primary structure comprises 227 residues: Phosphoribosylformylglycinamidine synthase subunit PurQ (227 aa).

The 223-residue stretch at 3 to 225 (FAVIVFPGSN…VKQGAHHVKT (223 aa)) folds into the Glutamine amidotransferase type-1 domain. Catalysis depends on Cys-86, which acts as the Nucleophile. Residues His-194 and Glu-196 contribute to the active site.

As to quaternary structure, part of the FGAM synthase complex composed of 1 PurL, 1 PurQ and 2 PurS subunits.

It localises to the cytoplasm. It carries out the reaction N(2)-formyl-N(1)-(5-phospho-beta-D-ribosyl)glycinamide + L-glutamine + ATP + H2O = 2-formamido-N(1)-(5-O-phospho-beta-D-ribosyl)acetamidine + L-glutamate + ADP + phosphate + H(+). The enzyme catalyses L-glutamine + H2O = L-glutamate + NH4(+). It participates in purine metabolism; IMP biosynthesis via de novo pathway; 5-amino-1-(5-phospho-D-ribosyl)imidazole from N(2)-formyl-N(1)-(5-phospho-D-ribosyl)glycinamide: step 1/2. Functionally, part of the phosphoribosylformylglycinamidine synthase complex involved in the purines biosynthetic pathway. Catalyzes the ATP-dependent conversion of formylglycinamide ribonucleotide (FGAR) and glutamine to yield formylglycinamidine ribonucleotide (FGAM) and glutamate. The FGAM synthase complex is composed of three subunits. PurQ produces an ammonia molecule by converting glutamine to glutamate. PurL transfers the ammonia molecule to FGAR to form FGAM in an ATP-dependent manner. PurS interacts with PurQ and PurL and is thought to assist in the transfer of the ammonia molecule from PurQ to PurL. The sequence is that of Phosphoribosylformylglycinamidine synthase subunit PurQ from Exiguobacterium sibiricum (strain DSM 17290 / CCUG 55495 / CIP 109462 / JCM 13490 / 255-15).